A 362-amino-acid polypeptide reads, in one-letter code: Alkanal monooxygenase alpha chain (362 aa).

The protein belongs to the bacterial luciferase oxidoreductase family. Heterodimer of an alpha and a beta chain.

It carries out the reaction a long-chain fatty aldehyde + FMNH2 + O2 = a long-chain fatty acid + hnu + FMN + H2O + 2 H(+). Its function is as follows. Light-emitting reaction in luminous bacteria. The protein is Alkanal monooxygenase alpha chain (luxA) of Photorhabdus luminescens (Xenorhabdus luminescens).